The following is a 350-amino-acid chain: C5a anaphylatoxin chemotactic receptor 1 (350 aa).

Over 1–36 the chain is Extracellular; the sequence is APMENSTYDYTNYDSLGTLDPSTPVDNTVRRLRPTT. Asn-5 carries an N-linked (GlcNAc...) asparagine glycan. Tyr-10 and Tyr-13 each carry sulfotyrosine. Residues 37 to 63 traverse the membrane as a helical segment; the sequence is IVALVIYMAVFLVGVPGNALVVWVTAL. Over 64–68 the chain is Cytoplasmic; the sequence is EAKRT. The helical transmembrane segment at 69 to 92 threads the bilayer; the sequence is VNAIWFLNLAVADLLSCLALPILF. Residues 93 to 109 lie on the Extracellular side of the membrane; that stretch reads VSIIQEGHWPFGRAACS. Cys-108 and Cys-187 are disulfide-bonded. A helical transmembrane segment spans residues 110 to 131; the sequence is VLPSLILLNMYASILLLATISA. At 132–152 the chain is on the cytoplasmic side; it reads DRFLLVFNPIWCQNTRGAGLA. Residues 153–173 traverse the membrane as a helical segment; that stretch reads WLACCVAWGLALLLTIPSFLY. The Extracellular segment spans residues 174–200; it reads RKVLQDDYPPKTTCGVDYGHEGVRAER. Residues 201 to 226 form a helical membrane-spanning segment; the sequence is AVAIVRLVVGFLLPLFTLSVCYTFLL. Residues 227–242 are Cytoplasmic-facing; it reads LRTWSRNGTRSTKTLK. The helical transmembrane segment at 243-265 threads the bilayer; it reads VVVAVVVSFFIFWLPYQVMGMIL. Over 266-282 the chain is Extracellular; it reads ALLHPSSATFRWAIRLD. The helical transmembrane segment at 283-303 threads the bilayer; that stretch reads PLCIALAYVNCCINPIIYVVA. At 304–350 the chain is on the cytoplasmic side; it reads GKGFQGQLRKSLPSLLRNVLAEESVIQGSKSFSRSTVDTVADKCQAV. 6 positions are modified to phosphoserine: Ser-314, Ser-317, Ser-327, Ser-332, Ser-334, and Ser-338.

It belongs to the G-protein coupled receptor 1 family. As to quaternary structure, homodimer. May also form higher-order oligomers. Interacts (when phosphorylated) with ARRB1 and ARRB2; the interaction is associated with internalization of C5aR. Sulfation plays a critical role in the association of C5aR with C5a, but no significant role in the ability of the receptor to transduce a signal and mobilize calcium in response to a small peptide agonist. Post-translationally, phosphorylated on serine residues in response to C5a binding, resulting in internalization of the receptor and short-term desensitization to C5a.

The protein localises to the cell membrane. It is found in the cytoplasmic vesicle. Functionally, receptor for the chemotactic and inflammatory peptide anaphylatoxin C5a. The ligand interacts with at least two sites on the receptor: a high-affinity site on the extracellular N-terminus, and a second site in the transmembrane region which activates downstream signaling events. Receptor activation stimulates chemotaxis, granule enzyme release, intracellular calcium release and superoxide anion production. The chain is C5a anaphylatoxin chemotactic receptor 1 (C5AR1) from Oryctolagus cuniculus (Rabbit).